The primary structure comprises 179 residues: Exosome complex component Csl4 (179 aa).

Residues Gly58–Gly137 enclose the S1 motif domain. 4 residues coordinate Zn(2+): Cys143, Cys146, Cys159, and Cys162.

This sequence belongs to the CSL4 family. As to quaternary structure, component of the archaeal exosome complex. Forms a trimer of Rrp4 and/or Csl4 subunits. The trimer associates with a hexameric ring-like arrangement composed of 3 Rrp41-Rrp42 heterodimers. Interacts with DnaG.

It localises to the cytoplasm. In terms of biological role, non-catalytic component of the exosome, which is a complex involved in RNA degradation. Increases the RNA binding and the efficiency of RNA degradation. Helpful for the interaction of the exosome with A-poor RNAs. The polypeptide is Exosome complex component Csl4 (Archaeoglobus fulgidus (strain ATCC 49558 / DSM 4304 / JCM 9628 / NBRC 100126 / VC-16)).